The chain runs to 412 residues: Argininosuccinate synthase (412 aa).

ATP contacts are provided by residues 24–32 (AFSGGLDTS) and alanine 50. Positions 103 and 108 each coordinate L-citrulline. Glycine 132 contacts ATP. Threonine 134, asparagine 138, and aspartate 139 together coordinate L-aspartate. Position 138 (asparagine 138) interacts with L-citrulline. Arginine 142 lines the L-citrulline pocket.

This sequence belongs to the argininosuccinate synthase family. Type 1 subfamily. In terms of assembly, homotetramer.

It localises to the cytoplasm. It carries out the reaction L-citrulline + L-aspartate + ATP = 2-(N(omega)-L-arginino)succinate + AMP + diphosphate + H(+). The protein operates within amino-acid biosynthesis; L-arginine biosynthesis; L-arginine from L-ornithine and carbamoyl phosphate: step 2/3. The sequence is that of Argininosuccinate synthase from Xanthomonas axonopodis pv. citri (strain 306).